Reading from the N-terminus, the 197-residue chain is Ribose 1,5-bisphosphate phosphokinase PhnN (197 aa).

21 to 28 (GPSGAGKD) provides a ligand contact to ATP.

It belongs to the ribose 1,5-bisphosphokinase family.

The enzyme catalyses alpha-D-ribose 1,5-bisphosphate + ATP = 5-phospho-alpha-D-ribose 1-diphosphate + ADP. It participates in metabolic intermediate biosynthesis; 5-phospho-alpha-D-ribose 1-diphosphate biosynthesis; 5-phospho-alpha-D-ribose 1-diphosphate from D-ribose 5-phosphate (route II): step 3/3. Catalyzes the phosphorylation of ribose 1,5-bisphosphate to 5-phospho-D-ribosyl alpha-1-diphosphate (PRPP). The chain is Ribose 1,5-bisphosphate phosphokinase PhnN from Rhizobium etli (strain CIAT 652).